Reading from the N-terminus, the 301-residue chain is tRNA uridine(34) hydroxylase (301 aa).

Residues 120–214 (SAPDVAVIDT…YLEDVPEDQS (95 aa)) form the Rhodanese domain. The Cysteine persulfide intermediate role is filled by Cys-174.

The protein belongs to the TrhO family.

The catalysed reaction is uridine(34) in tRNA + AH2 + O2 = 5-hydroxyuridine(34) in tRNA + A + H2O. In terms of biological role, catalyzes oxygen-dependent 5-hydroxyuridine (ho5U) modification at position 34 in tRNAs. This Jannaschia sp. (strain CCS1) protein is tRNA uridine(34) hydroxylase.